Reading from the N-terminus, the 917-residue chain is von Willebrand factor A domain-containing protein DDB_G0285975 (917 aa).

Positions 12–51 (DTTTTTTPTTPTTPTTPTTTPTTTTTPTTTPTTTTTSTTP) are disordered. A compositionally biased stretch (low complexity) spans 13-51 (TTTTTTPTTPTTPTTPTTTPTTTTTPTTTPTTTTTSTTP). The VIT domain occupies 87–215 (RYNTGLKNIS…NVTIHLTIIS (129 aa)). A VWFA domain is found at 339–507 (EFIFLIDCSG…NFEEQVMKLV (169 aa)). Positions 679–741 (LFSSENRNQT…INSIPQKSNI (63 aa)) constitute a t-SNARE coiled-coil homology domain. Low complexity-rich tracts occupy residues 751 to 760 (SPSEVSTSKS) and 774 to 818 (NNNN…NNNN). The tract at residues 751–822 (SPSEVSTSKS…NNNNNNSDNS (72 aa)) is disordered.

This Dictyostelium discoideum (Social amoeba) protein is von Willebrand factor A domain-containing protein DDB_G0285975.